The following is a 379-amino-acid chain: Sterol 24-C-methyltransferase erg-4 (379 aa).

The protein belongs to the class I-like SAM-binding methyltransferase superfamily. Erg6/SMT family.

It catalyses the reaction lanosterol + S-adenosyl-L-methionine = eburicol + S-adenosyl-L-homocysteine + H(+). Its pathway is steroid metabolism; ergosterol biosynthesis. Its function is as follows. Catalyzes the methyl transfer from S-adenosyl-methionine to the C-24 of lanosterol to form eburicol. This Neurospora crassa (strain ATCC 24698 / 74-OR23-1A / CBS 708.71 / DSM 1257 / FGSC 987) protein is Sterol 24-C-methyltransferase erg-4.